The following is a 165-amino-acid chain: Ribosome maturation factor RimM (165 aa).

The region spanning 92 to 163 is the PRC barrel domain; it reads EARHYWADLE…RVVVDPPEGL (72 aa).

Belongs to the RimM family. Binds ribosomal protein uS19.

The protein resides in the cytoplasm. Functionally, an accessory protein needed during the final step in the assembly of 30S ribosomal subunit, possibly for assembly of the head region. Essential for efficient processing of 16S rRNA. May be needed both before and after RbfA during the maturation of 16S rRNA. It has affinity for free ribosomal 30S subunits but not for 70S ribosomes. The protein is Ribosome maturation factor RimM of Anaeromyxobacter sp. (strain Fw109-5).